A 663-amino-acid polypeptide reads, in one-letter code: Rho GTPase-activating protein 18 (663 aa).

Disordered stretches follow at residues 14–73 (AYHP…DESM) and 85–106 (RSNENRQEGQEAIVVKEPDEGE). Residues 27–37 (SHVKGGDEATS) show a composition bias toward basic and acidic residues. Positions 38 to 51 (SRRYGQYTINQEGS) are enriched in polar residues. S65 and S68 each carry phosphoserine. Residues 85-102 (RSNENRQEGQEAIVVKEP) are compositionally biased toward basic and acidic residues. T156 is modified (phosphothreonine). 2 disordered regions span residues 173–228 (FAQQ…PASE) and 245–277 (KEFSKERTQKISSNDSLPSFRLPKDKTGTTRIG). Basic and acidic residues-rich tracts occupy residues 178-205 (EAQEKPPDDSDLRSVRTNENKGQGKDDQ) and 212-222 (DSKEQISRVPE). Phosphoserine is present on residues S260 and S263. The Rho-GAP domain maps to 324–523 (IPLTILLEQD…LLIRYQKILW (200 aa)). S610 is subject to Phosphoserine.

In terms of assembly, interacts with MPHOSPH6. In terms of tissue distribution, widely expressed: expressed in most organs, except small intestine.

The protein resides in the cytoplasm. Rho GTPase activating protein that suppresses F-actin polymerization by inhibiting Rho. Rho GTPase activating proteins act by converting Rho-type GTPases to an inactive GDP-bound state. Plays a key role in tissue tension and 3D tissue shape by regulating cortical actomyosin network formation. Acts downstream of YAP1 and inhibits actin polymerization, which in turn reduces nuclear localization of YAP1. Regulates cell shape, spreading, and migration. The protein is Rho GTPase-activating protein 18 of Mus musculus (Mouse).